The primary structure comprises 396 residues: Probable tRNA sulfurtransferase (396 aa).

The 104-residue stretch at 63 to 166 (AAAARASARV…GRRAYFFDTI (104 aa)) folds into the THUMP domain. Residues 184–185 (LY), arginine 266, glycine 288, and glutamine 297 each bind ATP.

It belongs to the ThiI family.

The protein localises to the cytoplasm. It carries out the reaction [ThiI sulfur-carrier protein]-S-sulfanyl-L-cysteine + a uridine in tRNA + 2 reduced [2Fe-2S]-[ferredoxin] + ATP + H(+) = [ThiI sulfur-carrier protein]-L-cysteine + a 4-thiouridine in tRNA + 2 oxidized [2Fe-2S]-[ferredoxin] + AMP + diphosphate. The enzyme catalyses [ThiS sulfur-carrier protein]-C-terminal Gly-Gly-AMP + S-sulfanyl-L-cysteinyl-[cysteine desulfurase] + AH2 = [ThiS sulfur-carrier protein]-C-terminal-Gly-aminoethanethioate + L-cysteinyl-[cysteine desulfurase] + A + AMP + 2 H(+). It functions in the pathway cofactor biosynthesis; thiamine diphosphate biosynthesis. Functionally, catalyzes the ATP-dependent transfer of a sulfur to tRNA to produce 4-thiouridine in position 8 of tRNAs, which functions as a near-UV photosensor. Also catalyzes the transfer of sulfur to the sulfur carrier protein ThiS, forming ThiS-thiocarboxylate. This is a step in the synthesis of thiazole, in the thiamine biosynthesis pathway. The sulfur is donated as persulfide by IscS. In Aeropyrum pernix (strain ATCC 700893 / DSM 11879 / JCM 9820 / NBRC 100138 / K1), this protein is Probable tRNA sulfurtransferase.